Reading from the N-terminus, the 143-residue chain is MAKKIVGFIKLQVPAGKANPSPPIGPALGQRGLNIMEFCKAFNAQTQGIEPGLKLPVVITAYADKSFTFILKSPPASVLLKKAAKIDKGSPRPHLEKVAKLTRAQLEEIAKIKVKDLTAANMDAAVRTIAGSARSMGINVEGV.

It belongs to the universal ribosomal protein uL11 family. As to quaternary structure, part of the ribosomal stalk of the 50S ribosomal subunit. Interacts with L10 and the large rRNA to form the base of the stalk. L10 forms an elongated spine to which L12 dimers bind in a sequential fashion forming a multimeric L10(L12)X complex. Post-translationally, one or more lysine residues are methylated.

In terms of biological role, forms part of the ribosomal stalk which helps the ribosome interact with GTP-bound translation factors. In Leptothrix cholodnii (strain ATCC 51168 / LMG 8142 / SP-6) (Leptothrix discophora (strain SP-6)), this protein is Large ribosomal subunit protein uL11.